The following is a 199-amino-acid chain: dITP/XTP pyrophosphatase (199 aa).

7–12 (SANKGK) is a binding site for substrate. Mg(2+)-binding residues include D38 and D73. Catalysis depends on D73, which acts as the Proton acceptor. Residues S74, 155–158 (FGYD), K178, and 183–184 (HR) each bind substrate.

This sequence belongs to the HAM1 NTPase family. Homodimer. Mg(2+) is required as a cofactor.

It catalyses the reaction XTP + H2O = XMP + diphosphate + H(+). It carries out the reaction dITP + H2O = dIMP + diphosphate + H(+). The catalysed reaction is ITP + H2O = IMP + diphosphate + H(+). Its function is as follows. Pyrophosphatase that catalyzes the hydrolysis of nucleoside triphosphates to their monophosphate derivatives, with a high preference for the non-canonical purine nucleotides XTP (xanthosine triphosphate), dITP (deoxyinosine triphosphate) and ITP. Seems to function as a house-cleaning enzyme that removes non-canonical purine nucleotides from the nucleotide pool, thus preventing their incorporation into DNA/RNA and avoiding chromosomal lesions. In Aliarcobacter butzleri (strain RM4018) (Arcobacter butzleri), this protein is dITP/XTP pyrophosphatase.